The chain runs to 251 residues: CDP-diacylglycerol pyrophosphatase (251 aa).

A helical membrane pass occupies residues 4-24 (AGLLFLVMIVIAVVAAGIGYW).

Belongs to the Cdh family.

It is found in the cell inner membrane. The catalysed reaction is a CDP-1,2-diacyl-sn-glycerol + H2O = a 1,2-diacyl-sn-glycero-3-phosphate + CMP + 2 H(+). Its pathway is phospholipid metabolism; CDP-diacylglycerol degradation; phosphatidate from CDP-diacylglycerol: step 1/1. The polypeptide is CDP-diacylglycerol pyrophosphatase (Escherichia coli O127:H6 (strain E2348/69 / EPEC)).